The primary structure comprises 51 residues: Large ribosomal subunit protein eL39 (51 aa).

This sequence belongs to the eukaryotic ribosomal protein eL39 family.

This chain is Large ribosomal subunit protein eL39 (rpl39e), found in Aeropyrum pernix (strain ATCC 700893 / DSM 11879 / JCM 9820 / NBRC 100138 / K1).